A 238-amino-acid polypeptide reads, in one-letter code: MATPHINAEMGDFADVVLMPGDPLRAKYIAETFLQDVRQVNNVRGMLGFTGTYKGRKISVMGHGMGIPSCSIYAKELITDFGVKVIIRVGSCGAVLPDVELRDVVIGMGACTDSKVNRLRFKDQDFAAIADFELVQNAVSAAKAKDIKVRVGNIFSADLFYSPDPEMFDVMEKYGILGVEMEAAGIYGVAAEYGARALTICTVSDHIKKGTQTTSEERQTTFNEMIEIALESVLLLED.

A purine D-ribonucleoside is bound at residue histidine 5. Residues glycine 21, arginine 25, arginine 44, and arginine 88–serine 91 contribute to the phosphate site. A purine D-ribonucleoside contacts are provided by residues glutamate 180 to glutamate 182 and serine 204 to aspartate 205. The active-site Proton donor is the aspartate 205.

Belongs to the PNP/UDP phosphorylase family. As to quaternary structure, homohexamer; trimer of homodimers.

It carries out the reaction a purine D-ribonucleoside + phosphate = a purine nucleobase + alpha-D-ribose 1-phosphate. It catalyses the reaction a purine 2'-deoxy-D-ribonucleoside + phosphate = a purine nucleobase + 2-deoxy-alpha-D-ribose 1-phosphate. Catalyzes the reversible phosphorolytic breakdown of the N-glycosidic bond in the beta-(deoxy)ribonucleoside molecules, with the formation of the corresponding free purine bases and pentose-1-phosphate. The protein is Purine nucleoside phosphorylase DeoD-type of Proteus mirabilis (strain HI4320).